Here is a 342-residue protein sequence, read N- to C-terminus: Isopentenyl-diphosphate delta-isomerase (342 aa).

Residue 11-12 (RK) participates in substrate binding. FMN-binding positions include S68, 69–71 (SMT), S99, and N127. 99–101 (SMR) contacts substrate. Q162 contributes to the substrate binding site. Residue E163 participates in Mg(2+) binding. FMN-binding positions include K194, T224, 274–276 (GLK), and 295–296 (AG).

This sequence belongs to the IPP isomerase type 2 family. In terms of assembly, homooctamer. Dimer of tetramers. It depends on FMN as a cofactor. The cofactor is NADPH. Mg(2+) serves as cofactor.

Its subcellular location is the cytoplasm. The enzyme catalyses isopentenyl diphosphate = dimethylallyl diphosphate. In terms of biological role, involved in the biosynthesis of isoprenoids. Catalyzes the 1,3-allylic rearrangement of the homoallylic substrate isopentenyl (IPP) to its allylic isomer, dimethylallyl diphosphate (DMAPP). This Rickettsia peacockii (strain Rustic) protein is Isopentenyl-diphosphate delta-isomerase.